The primary structure comprises 534 residues: Acyl-CoA-binding domain-containing protein 5 (534 aa).

Positions H41–M130 constitute an ACB domain. I52–F61 is an an acyl-CoA binding site. P63 carries the post-translational modification Phosphothreonine. Residues Y72 to K76, K98, and Y117 each bind an acyl-CoA. Phosphothreonine is present on residues L137 and E172. The disordered stretch occupies residues T181–S225. The stretch at K190–K219 forms a coiled coil. Phosphoserine occurs at positions 193, 194, 196, 200, 215, 279, and 313. Residues E207–S225 show a composition bias toward basic and acidic residues. Residues E376–R385 are compositionally biased toward basic and acidic residues. Residues E376–R442 are disordered. Position 400 is a phosphothreonine (T400). The residue at position 428 (S428) is a Phosphoserine. Basic and acidic residues predominate over residues D431–S441. A coiled-coil region spans residues E447 to L476. N6-acetyllysine is present on K469. The chain crosses the membrane as a helical span at residues G506–Y526.

It belongs to the ATG37 family.

Its subcellular location is the peroxisome membrane. Acyl-CoA binding protein which acts as the peroxisome receptor for pexophagy but is dispensable for aggrephagy and nonselective autophagy. Binds medium- and long-chain acyl-CoA esters. The sequence is that of Acyl-CoA-binding domain-containing protein 5 (ACBD5) from Homo sapiens (Human).